The chain runs to 486 residues: N-succinylglutamate 5-semialdehyde dehydrogenase (486 aa).

220 to 225 (GSSRTG) is an NAD(+) binding site. Catalysis depends on residues Glu243 and Cys277.

Belongs to the aldehyde dehydrogenase family. AstD subfamily.

It carries out the reaction N-succinyl-L-glutamate 5-semialdehyde + NAD(+) + H2O = N-succinyl-L-glutamate + NADH + 2 H(+). The protein operates within amino-acid degradation; L-arginine degradation via AST pathway; L-glutamate and succinate from L-arginine: step 4/5. In terms of biological role, catalyzes the NAD-dependent reduction of succinylglutamate semialdehyde into succinylglutamate. The protein is N-succinylglutamate 5-semialdehyde dehydrogenase of Shewanella sp. (strain W3-18-1).